We begin with the raw amino-acid sequence, 328 residues long: GTP 3',8-cyclase (328 aa).

The Radical SAM core domain maps to Met-1–Ala-229. Arg-8 is a GTP binding site. [4Fe-4S] cluster-binding residues include Cys-15 and Cys-19. Tyr-21 serves as a coordination point for S-adenosyl-L-methionine. Cys-22 contacts [4Fe-4S] cluster. Residue Arg-60 participates in GTP binding. Residue Gly-64 coordinates S-adenosyl-L-methionine. A GTP-binding site is contributed by Thr-91. Residue Ser-115 participates in S-adenosyl-L-methionine binding. A GTP-binding site is contributed by Lys-155. Position 189 (Met-189) interacts with S-adenosyl-L-methionine. Cys-252 and Cys-255 together coordinate [4Fe-4S] cluster. Arg-257–Arg-259 is a binding site for GTP. Cys-269 provides a ligand contact to [4Fe-4S] cluster.

Belongs to the radical SAM superfamily. MoaA family. Monomer and homodimer. [4Fe-4S] cluster is required as a cofactor.

The enzyme catalyses GTP + AH2 + S-adenosyl-L-methionine = (8S)-3',8-cyclo-7,8-dihydroguanosine 5'-triphosphate + 5'-deoxyadenosine + L-methionine + A + H(+). It functions in the pathway cofactor biosynthesis; molybdopterin biosynthesis. Catalyzes the cyclization of GTP to (8S)-3',8-cyclo-7,8-dihydroguanosine 5'-triphosphate. This Trichormus variabilis (strain ATCC 29413 / PCC 7937) (Anabaena variabilis) protein is GTP 3',8-cyclase.